Reading from the N-terminus, the 284-residue chain is Putative ABC transporter ATP-binding protein SCO5958 (284 aa).

The ABC transporter domain occupies 15–250 (VALRGAAFAY…DLLRRAGLRL (236 aa)). 48 to 55 (GRNGSGKT) lines the ATP pocket.

It belongs to the ABC transporter superfamily.

It localises to the cell membrane. Its function is as follows. Probably part of an ABC transporter complex. Responsible for energy coupling to the transport system. The polypeptide is Putative ABC transporter ATP-binding protein SCO5958 (Streptomyces coelicolor (strain ATCC BAA-471 / A3(2) / M145)).